We begin with the raw amino-acid sequence, 114 residues long: Non-specific lipid-transfer protein 2 (114 aa).

The N-terminal stretch at 1 to 23 (MEMFGKIACFVVFCMVVVAPHAE) is a signal peptide. Disulfide bonds link Cys27/Cys73, Cys37/Cys50, Cys51/Cys96, and Cys71/Cys110.

It belongs to the plant LTP family.

Functionally, plant non-specific lipid-transfer proteins transfer phospholipids as well as galactolipids across membranes. May play a role in wax or cutin deposition in the cell walls of expanding epidermal cells and certain secretory tissues. The chain is Non-specific lipid-transfer protein 2 (LE16) from Solanum lycopersicum (Tomato).